A 1353-amino-acid polypeptide reads, in one-letter code: Adenylate cyclase type 9 (1353 aa).

2 disordered regions span residues 1–27 and 49–71; these read MASP…DSNS and SISS…GGGG. Residues 1–117 lie on the Cytoplasmic side of the membrane; it reads MASPPHQQLL…CFPQTQRRFR (117 aa). A compositionally biased stretch (polar residues) spans 16 to 27; the sequence is EVSCDSSGDSNS. A compositionally biased stretch (low complexity) spans 49–66; that stretch reads SISSSCSSSGDSGGVPRR. Residues 118–138 traverse the membrane as a helical segment; the sequence is YALFYIGFACLLWSIYFAVHM. The Extracellular portion of the chain corresponds to 139–141; the sequence is RSR. Residues 142 to 162 traverse the membrane as a helical segment; the sequence is LIVMVAPALCFLLVCVGFFLF. Residues 163-171 are Cytoplasmic-facing; the sequence is TFTKLYARH. Residues 172 to 192 form a helical membrane-spanning segment; the sequence is YAWTSLALTLLVFALTLAAQF. Residues 193-215 are Extracellular-facing; sequence QVLTPVSGRGDSSNLTATARPTD. Asparagine 206 is a glycosylation site (N-linked (GlcNAc...) asparagine). A helical membrane pass occupies residues 216-235; that stretch reads TCLSQVGSFSMCIEVLFLLY. Residues 236–241 are Cytoplasmic-facing; that stretch reads TVMHLP. The helical transmembrane segment at 242–259 threads the bilayer; the sequence is LYLSLCLGVAYSVLFETF. The Extracellular segment spans residues 260–280; that stretch reads GYHFRDEACFPSPGAGALHWE. Residues 281-301 traverse the membrane as a helical segment; the sequence is LLSRGLLHGCIHAIGVHLFVM. The Cytoplasmic portion of the chain corresponds to 302–786; it reads SQVRSRSTFL…VKTFASPTFS (485 aa). The interval 349 to 375 is disordered; it reads QGDEESENSVKRHATSSPKNRKKKSSI. The span at 359–374 shows a compositional bias: basic residues; sequence KRHATSSPKNRKKKSS. The region spanning 394–521 is the Guanylate cyclase 1 domain; it reads SILFADIVGF…NDVNLANLME (128 aa). Mg(2+)-binding residues include aspartate 399, isoleucine 400, and aspartate 443. ATP contacts are provided by residues 399-404, 441-443, and arginine 487; these read DIVGFT and LGD. Phosphoserine is present on serine 610. A disordered region spans residues 642 to 684; sequence EAGAEGGAPQNGCQDEHKNSTKASGGPNPKTQNGLLSPPQEEK. Serine 688, serine 691, and serine 706 each carry phosphoserine. Residues 787 to 807 form a helical membrane-spanning segment; that stretch reads SLLDVFLSTTVFLTLSTTCFL. Residues 808–818 lie on the Extracellular side of the membrane; it reads KYEAATVPPPP. Residues 819 to 839 form a helical membrane-spanning segment; it reads AALAVFSAALLLEVLSLAVSI. Topologically, residues 840–867 are cytoplasmic; sequence RMVFFLEDVMACTKRLLEWIAGWLPRHC. Residues 868–888 form a helical membrane-spanning segment; it reads IGAILVSLPALAVYSHVTSEY. Residues 889–891 lie on the Extracellular side of the membrane; sequence ETN. A helical membrane pass occupies residues 892-912; that stretch reads IHFPVFTGSAALIAVVHYCNF. Topologically, residues 913–920 are cytoplasmic; it reads CQLSSWMR. A helical transmembrane segment spans residues 921 to 941; it reads SSLATVVGAGPLLLLYVSLCP. Residues 942–975 lie on the Extracellular side of the membrane; it reads DSSVLTSPLDAVQNFSSERNPCNSSVPRDLRRPA. Asparagine 955 and asparagine 964 each carry an N-linked (GlcNAc...) asparagine glycan. A helical transmembrane segment spans residues 976 to 996; it reads SLIGQEVVLVFFLLLLLVWFL. The Cytoplasmic portion of the chain corresponds to 997–1353; the sequence is NREFEVSYRL…LTKLNVSKSV (357 aa). Residues 1058–1198 enclose the Guanylate cyclase 2 domain; that stretch reads GVIFASIVNF…DTVNIASRMD (141 aa). Residues lysine 1108, 1185–1187, 1192–1196, and lysine 1232 contribute to the ATP site; these read DIW and NIASR. A phosphoserine mark is found at serine 1257, serine 1259, serine 1295, and serine 1307. Residues 1292-1301 show a composition bias toward polar residues; that stretch reads SLGSDSSTQA. The disordered stretch occupies residues 1292-1326; it reads SLGSDSSTQAKDAHLSPKRPWKEPVKAEERGRFGK. Over residues 1302 to 1326 the composition is skewed to basic and acidic residues; the sequence is KDAHLSPKRPWKEPVKAEERGRFGK.

The protein belongs to the adenylyl cyclase class-4/guanylyl cyclase family. It depends on Mg(2+) as a cofactor. Mn(2+) serves as cofactor. In terms of tissue distribution, detected in skeletal muscle, pancreas, lung, heart, kidney, liver, brain and placenta. Expressed in multiple cells of the lung, with expression highest in airway smooth muscle.

The protein localises to the cell membrane. It carries out the reaction ATP = 3',5'-cyclic AMP + diphosphate. With respect to regulation, insensitive to calcium/calmodulin, forskolin and somatostatin. Stimulated by beta-adrenergic receptor activation. Activity is down-regulated by calcium/calcineurin. Functionally, adenylyl cyclase that catalyzes the formation of the signaling molecule cAMP in response to activation of G protein-coupled receptors. Contributes to signaling cascades activated by CRH (corticotropin-releasing factor), corticosteroids and beta-adrenergic receptors. This chain is Adenylate cyclase type 9 (ADCY9), found in Homo sapiens (Human).